Reading from the N-terminus, the 302-residue chain is 4-hydroxy-tetrahydrodipicolinate synthase (302 aa).

Pyruvate is bound at residue Thr-55. The active-site Proton donor/acceptor is Tyr-144. Residue Lys-172 is the Schiff-base intermediate with substrate of the active site. Residue Val-214 participates in pyruvate binding.

Belongs to the DapA family. In terms of assembly, homotetramer; dimer of dimers.

It localises to the cytoplasm. The enzyme catalyses L-aspartate 4-semialdehyde + pyruvate = (2S,4S)-4-hydroxy-2,3,4,5-tetrahydrodipicolinate + H2O + H(+). It functions in the pathway amino-acid biosynthesis; L-lysine biosynthesis via DAP pathway; (S)-tetrahydrodipicolinate from L-aspartate: step 3/4. Catalyzes the condensation of (S)-aspartate-beta-semialdehyde [(S)-ASA] and pyruvate to 4-hydroxy-tetrahydrodipicolinate (HTPA). In Prochlorococcus marinus (strain NATL2A), this protein is 4-hydroxy-tetrahydrodipicolinate synthase.